The primary structure comprises 748 residues: Cytosolic phospholipase A2 (748 aa).

The interval 1–178 is phospholipid binding; it reads MSFIDPYQHI…MKKLLGPKKS (178 aa). S2 is modified (phosphoserine). A C2 domain is found at 6-122; it reads PYQHIIVEHQ…KVGEKKEVPF (117 aa). Ca(2+) is bound by residues D40, T41, D43, N65, D93, A94, and N95. One can recognise a PLA2c domain in the interval 140–739; it reads SCPDLRFSMA…SNVEARKFFN (600 aa). Catalysis depends on S228, which acts as the Nucleophile. At T268 the chain carries Phosphothreonine. The segment at 427–458 is disordered; that stretch reads KHIVSNDSSDSDDEAQGPKGTENEEAEKEYQS. 3 positions are modified to phosphoserine: S434, S435, and S437. A Phosphoserine; by MAPK modification is found at S505. Phosphoserine is present on S515. K540 is covalently cross-linked (Glycyl lysine isopeptide (Lys-Gly) (interchain with G-Cter in SUMO2)). D548 functions as the Proton acceptor in the catalytic mechanism. A Glycyl lysine isopeptide (Lys-Gly) (interchain with G-Cter in SUMO2) cross-link involves residue K605. Phosphoserine is present on residues S726 and S728.

As to quaternary structure, interacts with KAT5. Post-translationally, phosphorylated at both Ser-505 and Ser-726 in response to mitogenic stimuli. In terms of tissue distribution, expressed in various organs including uterus, kidney, spleen, liver, heart, lung and brain (at protein level).

The protein localises to the cytoplasm. Its subcellular location is the golgi apparatus membrane. It localises to the nucleus envelope. It catalyses the reaction a 1,2-diacyl-sn-glycero-3-phosphocholine + H2O = a 1-acyl-sn-glycero-3-phosphocholine + a fatty acid + H(+). The catalysed reaction is a 1-O-alkyl-2-acyl-sn-glycero-3-phosphocholine + H2O = a 1-O-alkyl-sn-glycero-3-phosphocholine + a fatty acid + H(+). The enzyme catalyses a 1-acyl-sn-glycero-3-phosphocholine + H2O = sn-glycerol 3-phosphocholine + a fatty acid + H(+). It carries out the reaction 1-hexadecanoyl-2-(5Z,8Z,11Z,14Z-eicosatetraenoyl)-sn-glycero-3-phosphocholine + H2O = 1-hexadecanoyl-sn-glycero-3-phosphocholine + (5Z,8Z,11Z,14Z)-eicosatetraenoate + H(+). It catalyses the reaction 1,2-di-(5Z,8Z,11Z,14Z-eicosatetraenoyl)-sn-glycero-3-phosphocholine + H2O = 1-(5Z,8Z,11Z,14Z-eicosatetraenoyl)-sn-glycero-3-phosphocholine + (5Z,8Z,11Z,14Z)-eicosatetraenoate + H(+). The catalysed reaction is 1-octadecanoyl-2-(5Z,8Z,11Z,14Z-eicosatetraenoyl)-sn-glycero-3-phosphocholine + H2O = 1-octadecanoyl-sn-glycero-3-phosphocholine + (5Z,8Z,11Z,14Z)-eicosatetraenoate + H(+). The enzyme catalyses 1-hexadecanoyl-2-(9Z,12Z-octadecadienoyl)-sn-glycero-3-phosphocholine + H2O = (9Z,12Z)-octadecadienoate + 1-hexadecanoyl-sn-glycero-3-phosphocholine + H(+). It carries out the reaction 1-octadecanoyl-2-(9Z,12Z,15Z-octadecatrienoyl)-sn-glycero-3-phosphocholine + H2O = (9Z,12Z,15Z)-octadecatrienoate + 1-octadecanoyl-sn-glycero-3-phosphocholine + H(+). It catalyses the reaction 1-(5Z,8Z,11Z,14Z-eicosatetraenoyl)-2-hexadecanoyl-sn-glycero-3-phosphocholine + H2O = 1-(5Z,8Z,11Z,14Z-eicosatetraenoyl)-sn-glycero-3-phosphocholine + hexadecanoate + H(+). The catalysed reaction is 1-O-hexadecyl-2-(5Z,8Z,11Z,14Z)-eicosatetraenoyl-sn-glycero-3-phosphocholine + H2O = 1-O-hexadecyl-sn-glycero-3-phosphocholine + (5Z,8Z,11Z,14Z)-eicosatetraenoate + H(+). The enzyme catalyses 1,2-di-(9Z-octadecenoyl)-sn-glycero-3-phospho-(1'-sn-glycerol) + H2O = 1-(9Z-octadecenoyl)-sn-glycero-3-phospho-(1'-sn-glycerol) + (9Z)-octadecenoate + H(+). It carries out the reaction 1-octadecanoyl-2-(5Z,8Z,11Z,14Z-eicosatetraenoyl)-sn-glycero-3-phosphate + H2O = 1-octadecanoyl-sn-glycero-3-phosphate + (5Z,8Z,11Z,14Z)-eicosatetraenoate + H(+). It catalyses the reaction 1-hexadecanoyl-sn-glycero-3-phosphocholine + H2O = sn-glycerol 3-phosphocholine + hexadecanoate + H(+). The catalysed reaction is 2-(prostaglandin E2)-sn-glycero-3-phosphoethanolamine + H2O = sn-glycero-3-phosphoethanolamine + prostaglandin E2 + H(+). The enzyme catalyses 2-[(15S)-hydroxy-(5Z,8Z,11Z,13E)-eicosatetraenoyl]-sn-glycero-3-phosphocholine + H2O = (15S)-hydroxy-(5Z,8Z,11Z,13E)-eicosatetraenoate + sn-glycerol 3-phosphocholine + H(+). It carries out the reaction 2-[(15R)-hydroxy-(5Z,8Z,11Z,13E)-eicosatetraenoyl]-sn-glycero-3-phosphocholine + H2O = (15R)-hydroxy-(5Z,8Z,11Z,13E)-eicosatetraenoate + sn-glycerol 3-phosphocholine + H(+). It catalyses the reaction 2-(prostaglandin E2)-sn-glycero-3-phosphocholine + H2O = prostaglandin E2 + sn-glycerol 3-phosphocholine + H(+). The catalysed reaction is 2-[(11R)-hydroxy-(5Z,8Z,12E,14Z)-eicosatetraenoyl]-sn-glycero-3-phosphocholine + H2O = (11R)-hydroxy-(5Z,8Z,12E,14Z)-eicosatetraenoate + sn-glycerol 3-phosphocholine + H(+). The enzyme catalyses 1-(5Z,8Z,11Z,14Z-eicosatetraenoyl)-2-O-hexadecyl-sn-glycero-3-phosphocholine + H2O = 2-O-hexadecyl-sn-glycero-3-phosphocholine + (5Z,8Z,11Z,14Z)-eicosatetraenoate + H(+). It carries out the reaction 1-octadecanoyl-2-(5Z,8Z,11Z,14Z-eicosatetraenoyl)-sn-glycero-3-phosphocholine + glycerol = 1-(5Z,8Z,11Z,14Z-eicosatetraenoyl)-glycerol + 1-octadecanoyl-sn-glycero-3-phosphocholine. It catalyses the reaction 1-octadecanoyl-2-(9Z,12Z,15Z-octadecatrienoyl)-sn-glycero-3-phosphocholine + glycerol = 1-(9Z,12Z,15Z-octadecatrienoyl)-glycerol + 1-octadecanoyl-sn-glycero-3-phosphocholine. The protein operates within membrane lipid metabolism; glycerophospholipid metabolism. Its pathway is lipid metabolism; arachidonate metabolism. It functions in the pathway lipid metabolism; prostaglandin biosynthesis. It participates in lipid metabolism; leukotriene B4 biosynthesis. With respect to regulation, activated by cytosolic calcium, which is necessary for binding to membrane lipids. Activated by phosphorylation in response to mitogenic stimuli. Stimulated by agonists such as ATP and thrombin. In terms of biological role, has primarily calcium-dependent phospholipase and lysophospholipase activities, with a major role in membrane lipid remodeling and biosynthesis of lipid mediators of the inflammatory response. Plays an important role in embryo implantation and parturition through its ability to trigger prostanoid production. Preferentially hydrolyzes the ester bond of the fatty acyl group attached at sn-2 position of phospholipids (phospholipase A2 activity). Selectively hydrolyzes sn-2 arachidonoyl group from membrane phospholipids, providing the precursor for eicosanoid biosynthesis via the cyclooxygenase pathway. In an alternative pathway of eicosanoid biosynthesis, hydrolyzes sn-2 fatty acyl chain of eicosanoid lysophopholipids to release free bioactive eicosanoids. Hydrolyzes the ester bond of the fatty acyl group attached at sn-1 position of phospholipids (phospholipase A1 activity) only if an ether linkage rather than an ester linkage is present at the sn-2 position. This hydrolysis is not stereospecific. Has calcium-independent phospholipase A2 and lysophospholipase activities in the presence of phosphoinositides. Has O-acyltransferase activity. Catalyzes the transfer of fatty acyl chains from phospholipids to a primary hydroxyl group of glycerol (sn-1 or sn-3), potentially contributing to monoacylglycerol synthesis. This Mus musculus (Mouse) protein is Cytosolic phospholipase A2 (Pla2g4a).